Consider the following 156-residue polypeptide: Small ribosomal subunit protein uS7 (156 aa).

This sequence belongs to the universal ribosomal protein uS7 family. As to quaternary structure, part of the 30S ribosomal subunit. Contacts proteins S9 and S11.

Functionally, one of the primary rRNA binding proteins, it binds directly to 16S rRNA where it nucleates assembly of the head domain of the 30S subunit. Is located at the subunit interface close to the decoding center, probably blocks exit of the E-site tRNA. The protein is Small ribosomal subunit protein uS7 of Shewanella woodyi (strain ATCC 51908 / MS32).